Consider the following 1274-residue polypeptide: Protein ECM30 (1274 aa).

3 disordered regions span residues 23–42 (EDAD…SLSV), 405–439 (RRAV…QTKP), and 494–517 (SSSS…DTSN). Low complexity-rich tracts occupy residues 27–42 (ASSP…SLSV), 409–432 (STSS…AAYH), and 494–515 (SSSS…SNDT). S635 bears the Phosphoserine mark. The segment covering 803–822 (NQQHQNQQQGQNDNRGQNQN) has biased composition (low complexity). The segment at 803-842 (NQQHQNQQQGQNDNRGQNQNEDPGQENESPTPYLLFNPAS) is disordered. At S1065 the chain carries Phosphoserine. A disordered region spans residues 1100–1149 (HLRSSSSSSSITLEKTTSNSSSIRTRPNSHHVAPETNNNNSTNGNSNNSS). A compositionally biased stretch (polar residues) spans 1110–1125 (ITLEKTTSNSSSIRTR). Residues 1135-1149 (TNNNNSTNGNSNNSS) show a composition bias toward low complexity.

The protein localises to the cytoplasm. Seems to be involved in cell wall organization and biogenesis. The polypeptide is Protein ECM30 (ECM30) (Saccharomyces cerevisiae (strain ATCC 204508 / S288c) (Baker's yeast)).